Reading from the N-terminus, the 105-residue chain is UPF0145 protein VP1283 (105 aa).

Belongs to the UPF0145 family.

The sequence is that of UPF0145 protein VP1283 from Vibrio parahaemolyticus serotype O3:K6 (strain RIMD 2210633).